The following is an 867-amino-acid chain: Xylosyltransferase 2 (867 aa).

Residues 1-15 (MVASARVQKLVRRYK) are Cytoplasmic-facing. Residues 16 to 36 (LAIATALAILLLQGLVVWSFS) traverse the membrane as a helical; Signal-anchor for type II membrane protein segment. Residues 37 to 867 (VLEDDEPGEK…GPVKADGRLR (831 aa)) lie on the Lumenal side of the membrane. The interval 41-122 (DEPGEKGRQK…PPPEAPGRQN (82 aa)) is disordered. Basic and acidic residues predominate over residues 53 to 65 (RPLDPSEGSKDTD). The segment covering 73-82 (SAGRRHGRWR) has biased composition (basic residues). Residue N122 is glycosylated (N-linked (GlcNAc...) asparagine). Cystine bridges form between C161-C189 and C205-C447. UDP-alpha-D-xylose-binding positions include V238, D266, and 295 to 297 (TIW). N326 carries an N-linked (GlcNAc...) asparagine glycan. UDP-alpha-D-xylose-binding positions include 399-400 (DW), S480, and 503-504 (RK). 2 disulfides stabilise this stretch: C580/C835 and C828/C841. The N-linked (GlcNAc...) asparagine glycan is linked to N685.

The protein belongs to the glycosyltransferase 14 family. XylT subfamily. Monomer. It depends on Mg(2+) as a cofactor. Mn(2+) is required as a cofactor. Post-translationally, contains disulfide bonds.

It localises to the golgi apparatus membrane. Its subcellular location is the secreted. The catalysed reaction is UDP-alpha-D-xylose + L-seryl-[protein] = 3-O-(beta-D-xylosyl)-L-seryl-[protein] + UDP + H(+). The protein operates within glycan metabolism; chondroitin sulfate biosynthesis. Its pathway is glycan metabolism; heparan sulfate biosynthesis. Catalyzes the first step in the biosynthesis of chondroitin sulfate, heparan sulfate and dermatan sulfate proteoglycans, such as DCN. Transfers D-xylose from UDP-D-xylose to specific serine residues of the core protein. This chain is Xylosyltransferase 2 (XYLT2), found in Bos taurus (Bovine).